The chain runs to 255 residues: Pyrroloquinoline-quinone synthase (255 aa).

Belongs to the PqqC family.

It catalyses the reaction 6-(2-amino-2-carboxyethyl)-7,8-dioxo-1,2,3,4,7,8-hexahydroquinoline-2,4-dicarboxylate + 3 O2 = pyrroloquinoline quinone + 2 H2O2 + 2 H2O + H(+). Its pathway is cofactor biosynthesis; pyrroloquinoline quinone biosynthesis. In terms of biological role, ring cyclization and eight-electron oxidation of 3a-(2-amino-2-carboxyethyl)-4,5-dioxo-4,5,6,7,8,9-hexahydroquinoline-7,9-dicarboxylic-acid to PQQ. This Acinetobacter baylyi (strain ATCC 33305 / BD413 / ADP1) protein is Pyrroloquinoline-quinone synthase.